The chain runs to 200 residues: Superoxide dismutase [Fe] (200 aa).

His-28, His-80, Asp-162, and His-166 together coordinate Fe cation.

Belongs to the iron/manganese superoxide dismutase family. In terms of assembly, homodimer. Fe cation serves as cofactor.

The catalysed reaction is 2 superoxide + 2 H(+) = H2O2 + O2. Its function is as follows. Destroys superoxide anion radicals which are normally produced within the cells and which are toxic to biological systems. The sequence is that of Superoxide dismutase [Fe] (sodB) from Nostoc sp. (strain PCC 7120 / SAG 25.82 / UTEX 2576).